Here is a 212-residue protein sequence, read N- to C-terminus: dITP/XTP pyrophosphatase (212 aa).

Serine 7 to lysine 12 contacts substrate. Catalysis depends on aspartate 72, which acts as the Proton acceptor. A Mg(2+)-binding site is contributed by aspartate 72. Substrate-binding positions include serine 73, phenylalanine 163 to aspartate 166, lysine 187, and histidine 192 to arginine 193. A disordered region spans residues glycine 164 to glycine 194. The span at threonine 183–histidine 192 shows a compositional bias: basic and acidic residues.

Belongs to the HAM1 NTPase family. In terms of assembly, homodimer. It depends on Mg(2+) as a cofactor.

It catalyses the reaction XTP + H2O = XMP + diphosphate + H(+). The enzyme catalyses dITP + H2O = dIMP + diphosphate + H(+). The catalysed reaction is ITP + H2O = IMP + diphosphate + H(+). Functionally, pyrophosphatase that catalyzes the hydrolysis of nucleoside triphosphates to their monophosphate derivatives, with a high preference for the non-canonical purine nucleotides XTP (xanthosine triphosphate), dITP (deoxyinosine triphosphate) and ITP. Seems to function as a house-cleaning enzyme that removes non-canonical purine nucleotides from the nucleotide pool, thus preventing their incorporation into DNA/RNA and avoiding chromosomal lesions. This is dITP/XTP pyrophosphatase from Corynebacterium urealyticum (strain ATCC 43042 / DSM 7109).